Consider the following 239-residue polypeptide: Transcription factor MYB10 (239 aa).

2 HTH myb-type domains span residues 11 to 63 and 64 to 118; these read KSQV…INYL and RPGL…KKRL. 2 consecutive DNA-binding regions (H-T-H motif) follow at residues 39–63 and 91–114; these read WRSLPKLAGLMRCGKSCRLRWINYL and WSKIASNFPGRTDNEIKNVWNTHL.

In terms of tissue distribution, expressed in cauline leaves and siliques.

It is found in the nucleus. In terms of biological role, involved in metal ions homeostasis, including iron ions (Fe) acquisition, via the regulation of NAS4 and NAS2 genes expression. Necessary for plant survival in alkaline soil where iron availability is greatly restricted. Triggers tolerance to nickel (Ni) and zinc (Zn) ions. This Arabidopsis thaliana (Mouse-ear cress) protein is Transcription factor MYB10.